Here is a 290-residue protein sequence, read N- to C-terminus: MTILVLGGRGKTASRLSLLLDNAGVPFLVGSSSTSYVGPYKMTHFDWLNEDTWTNVFLRASLDGIDPISAVYLVGGHAPELVDPGIRFINVARAQGVNRFVLLSASNIAKGTHSMGILHAHLDSLEDVQYVVLRPTWFMENLLEDPHVSWIKKEDKIYSATGDGKIPFISADDIARVAFSVLTEWKSQRAQEYFVLGPELLSYDQVADILTTVLGRKITHVSLAEADLARLLRDDVGLPPDFAAMLASMETDVKHGTEVRNSHDVKKVTGSLPCSFLDFAEQEKARWMRH.

Belongs to the fgaFS/easG family.

The catalysed reaction is festuclavine + NAD(+) = 6,8-dimethyl-6,7-didehydroergoline + NADH + H(+). It functions in the pathway alkaloid biosynthesis; ergot alkaloid biosynthesis. Functionally, festuclavine dehydrogenase; part of the gene cluster that mediates the biosynthesis of fumiclavanine C, a fungal ergot alkaloid. DmaW catalyzes the first step of ergot alkaloid biosynthesis by condensing dimethylallyl diphosphate (DMAP) and tryptophan to form 4-dimethylallyl-L-tryptophan. The second step is catalyzed by the methyltransferase easF that methylates 4-dimethylallyl-L-tryptophan in the presence of S-adenosyl-L-methionine, resulting in the formation of 4-dimethylallyl-L-abrine. The catalase easC and the FAD-dependent oxidoreductase easE then transform 4-dimethylallyl-L-abrine to chanoclavine-I which is further oxidized by EasD in the presence of NAD(+), resulting in the formation of chanoclavine-I aldehyde. EasA reduces chanoclavine-I aldehyde to dihydrochanoclavine-I aldehyde that spontaneously dehydrates to form 6,8-dimethyl-6,7-didehydroergoline. EasG then catalyzes the reduction of 6,8-dimethyl-6,7-didehydroergoline to form festuclavine. Hydrolysis of festuclavine by easM then leads to the formation of fumigaclavine B which is in turn acetylated by easN to fumigaclavine A. Finally, easL catalyzes the conversion of fumigaclavine A into fumigaclavine C by attaching a dimethylallyl moiety to C-2 of the indole nucleus. This is Festuclavine dehydrogenase easG from Aspergillus fumigatus (strain ATCC MYA-4609 / CBS 101355 / FGSC A1100 / Af293) (Neosartorya fumigata).